A 277-amino-acid chain; its full sequence is Pantothenate synthetase (277 aa).

26 to 33 (MGNLHEGH) is a binding site for ATP. His33 functions as the Proton donor in the catalytic mechanism. (R)-pantoate is bound at residue Gln57. Gln57 lines the beta-alanine pocket. 144–147 (GKKD) is an ATP binding site. Gln150 lines the (R)-pantoate pocket. ATP contacts are provided by residues Val173 and 181-184 (LSSR).

The protein belongs to the pantothenate synthetase family. As to quaternary structure, homodimer.

It localises to the cytoplasm. It catalyses the reaction (R)-pantoate + beta-alanine + ATP = (R)-pantothenate + AMP + diphosphate + H(+). The protein operates within cofactor biosynthesis; (R)-pantothenate biosynthesis; (R)-pantothenate from (R)-pantoate and beta-alanine: step 1/1. Its function is as follows. Catalyzes the condensation of pantoate with beta-alanine in an ATP-dependent reaction via a pantoyl-adenylate intermediate. The polypeptide is Pantothenate synthetase (Paraburkholderia xenovorans (strain LB400)).